Consider the following 239-residue polypeptide: Geranylgeranylglyceryl phosphate synthase (239 aa).

A sn-glycerol 1-phosphate-binding site is contributed by K13. D15 and T42 together coordinate Mg(2+). Residues 162-167 (YIEYSG), G192, and 212-213 (GD) each bind sn-glycerol 1-phosphate.

This sequence belongs to the GGGP/HepGP synthase family. Group I subfamily. It depends on Mg(2+) as a cofactor.

It is found in the cytoplasm. It carries out the reaction sn-glycerol 1-phosphate + (2E,6E,10E)-geranylgeranyl diphosphate = sn-3-O-(geranylgeranyl)glycerol 1-phosphate + diphosphate. Its pathway is membrane lipid metabolism; glycerophospholipid metabolism. Its function is as follows. Prenyltransferase that catalyzes the transfer of the geranylgeranyl moiety of geranylgeranyl diphosphate (GGPP) to the C3 hydroxyl of sn-glycerol-1-phosphate (G1P). This reaction is the first ether-bond-formation step in the biosynthesis of archaeal membrane lipids. The sequence is that of Geranylgeranylglyceryl phosphate synthase from Haloquadratum walsbyi (strain DSM 16790 / HBSQ001).